A 222-amino-acid polypeptide reads, in one-letter code: Phosphoribosylformylglycinamidine synthase subunit PurQ (222 aa).

A Glutamine amidotransferase type-1 domain is found at 3–222; sequence SAVVLLPGLN…LFEGALGIAA (220 aa). C86 functions as the Nucleophile in the catalytic mechanism. Residues H196 and E198 contribute to the active site.

Part of the FGAM synthase complex composed of 1 PurL, 1 PurQ and 2 PurS subunits.

It localises to the cytoplasm. It carries out the reaction N(2)-formyl-N(1)-(5-phospho-beta-D-ribosyl)glycinamide + L-glutamine + ATP + H2O = 2-formamido-N(1)-(5-O-phospho-beta-D-ribosyl)acetamidine + L-glutamate + ADP + phosphate + H(+). The catalysed reaction is L-glutamine + H2O = L-glutamate + NH4(+). Its pathway is purine metabolism; IMP biosynthesis via de novo pathway; 5-amino-1-(5-phospho-D-ribosyl)imidazole from N(2)-formyl-N(1)-(5-phospho-D-ribosyl)glycinamide: step 1/2. Its function is as follows. Part of the phosphoribosylformylglycinamidine synthase complex involved in the purines biosynthetic pathway. Catalyzes the ATP-dependent conversion of formylglycinamide ribonucleotide (FGAR) and glutamine to yield formylglycinamidine ribonucleotide (FGAM) and glutamate. The FGAM synthase complex is composed of three subunits. PurQ produces an ammonia molecule by converting glutamine to glutamate. PurL transfers the ammonia molecule to FGAR to form FGAM in an ATP-dependent manner. PurS interacts with PurQ and PurL and is thought to assist in the transfer of the ammonia molecule from PurQ to PurL. The polypeptide is Phosphoribosylformylglycinamidine synthase subunit PurQ (Mesorhizobium japonicum (strain LMG 29417 / CECT 9101 / MAFF 303099) (Mesorhizobium loti (strain MAFF 303099))).